A 533-amino-acid polypeptide reads, in one-letter code: Probable nucleolar protein 5-1 (533 aa).

One can recognise a Nop domain in the interval 280-398 (IAPNLTALVG…LEARLRTLEG (119 aa)). Residues 402–533 (GRLSGSAKGK…EKKKKKKTEV (132 aa)) are disordered. Over residues 412 to 423 (PKIEVYDKDKKK) the composition is skewed to basic and acidic residues. Polar residues predominate over residues 433–450 (KTYNTAADSLLQTPTVDS). Composition is skewed to basic and acidic residues over residues 474-489 (TEEP…KTEA) and 515-524 (MPAKKKEKSE).

This sequence belongs to the NOP5/NOP56 family.

Its subcellular location is the nucleus. The protein resides in the nucleolus. Its function is as follows. Required for 60S ribosomal subunit biogenesis. This chain is Probable nucleolar protein 5-1 (NOP5-1), found in Arabidopsis thaliana (Mouse-ear cress).